The primary structure comprises 443 residues: Xaa-Pro dipeptidase (443 aa).

Mn(2+) contacts are provided by Asp246, Asp257, His339, Glu384, and Glu423.

It belongs to the peptidase M24B family. Bacterial-type prolidase subfamily. Mn(2+) serves as cofactor.

It catalyses the reaction Xaa-L-Pro dipeptide + H2O = an L-alpha-amino acid + L-proline. Functionally, splits dipeptides with a prolyl residue in the C-terminal position. The polypeptide is Xaa-Pro dipeptidase (Salmonella arizonae (strain ATCC BAA-731 / CDC346-86 / RSK2980)).